Here is a 363-residue protein sequence, read N- to C-terminus: Flagellar P-ring protein (363 aa).

The N-terminal stretch at Met1 to Ala20 is a signal peptide.

This sequence belongs to the FlgI family. In terms of assembly, the basal body constitutes a major portion of the flagellar organelle and consists of four rings (L,P,S, and M) mounted on a central rod.

The protein localises to the periplasm. It localises to the bacterial flagellum basal body. Its function is as follows. Assembles around the rod to form the L-ring and probably protects the motor/basal body from shearing forces during rotation. This is Flagellar P-ring protein from Shewanella loihica (strain ATCC BAA-1088 / PV-4).